The chain runs to 286 residues: Ribosomal RNA small subunit methyltransferase A (286 aa).

S-adenosyl-L-methionine is bound by residues asparagine 28, leucine 30, glycine 55, glutamate 77, aspartate 103, and asparagine 123.

This sequence belongs to the class I-like SAM-binding methyltransferase superfamily. rRNA adenine N(6)-methyltransferase family. RsmA subfamily.

It is found in the cytoplasm. It carries out the reaction adenosine(1518)/adenosine(1519) in 16S rRNA + 4 S-adenosyl-L-methionine = N(6)-dimethyladenosine(1518)/N(6)-dimethyladenosine(1519) in 16S rRNA + 4 S-adenosyl-L-homocysteine + 4 H(+). Its function is as follows. Specifically dimethylates two adjacent adenosines (A1518 and A1519) in the loop of a conserved hairpin near the 3'-end of 16S rRNA in the 30S particle. May play a critical role in biogenesis of 30S subunits. This chain is Ribosomal RNA small subunit methyltransferase A, found in Bradyrhizobium sp. (strain ORS 278).